The primary structure comprises 81 residues: Cytotoxin 2 (81 aa).

An N-terminal signal peptide occupies residues 1 to 21 (MKTLLLTLVVVTIVCLDLGYT). Disulfide bonds link C24-C42, C35-C59, C63-C74, and C75-C80.

The protein belongs to the three-finger toxin family. Short-chain subfamily. Type IA cytotoxin sub-subfamily. In terms of assembly, monomer in solution; Homodimer and oligomer in the presence of negatively charged lipids forming a pore with a size ranging between 20 and 30 Angstroms. In terms of tissue distribution, expressed by the venom gland.

It is found in the secreted. The protein resides in the target cell membrane. In terms of biological role, shows cytolytic activity on many different cells by forming pore in lipid membranes. In vivo, increases heart rate or kills the animal by cardiac arrest. In addition, it binds to heparin with high affinity, interacts with Kv channel-interacting protein 1 (KCNIP1) in a calcium-independent manner, and binds to integrin alpha-V/beta-3 (ITGAV/ITGB3) with moderate affinity. The chain is Cytotoxin 2 from Naja kaouthia (Monocled cobra).